Consider the following 239-residue polypeptide: MPLGHIMRLDLEKIALEYIVPCLHEVGFCYLDNFLGEVVGDCVLERVKQLHYNGALRDGQLAGPRAGVSKRHLRGDQITWIGGNEEGCEAINFLLSLIDRLVLYCGSRLGKYYVKERSKAMVACYPGNGTGYVRHVDNPNGDGRCITCIYYLNKNWDAKLHGGVLRIFPEGKSFVADVEPIFDRLLFSWSDRRNPHEVQPSYATRYAMTVWYFDAEERAEAKKKFRNLTRKTESALAKD.

Residues 62 to 73 are beta(2)beta(3) 'finger-like' loop; it reads AGPRAGVSKRHL. Residues 88–104 are required for interaction with ADRB2; it reads CEAINFLLSLIDRLVLY. Positions 116 to 214 constitute a Fe2OG dioxygenase domain; the sequence is ERSKAMVACY…RYAMTVWYFD (99 aa). Fe cation-binding residues include histidine 135, aspartate 137, and histidine 196. Arginine 205 serves as a coordination point for 2-oxoglutarate.

Interacts with ADRB2; the interaction hydroxylates ADRB2 facilitating its ubiquitination by the VHL-E3 ligase complex. Interacts with PAX2; the interaction targets PAX2 for destruction. Interacts with PKM; the interaction hydroxylates PKM in hypoxia. Interacts with WDR83; the interaction leads to almost complete elimination of HIF-mediated reporter activity. Interacts with BCL2 (via its BH4 domain); the interaction disrupts the BAX-BCL4 complex inhibiting the anti-apoptotic activity of BCL2. Fe(2+) is required as a cofactor. L-ascorbate serves as cofactor. In terms of processing, ubiquitinated by SIAH1 and/or SIAH2 in response to the unfolded protein response (UPR), leading to its degradation. In terms of tissue distribution, highly expressed in vascular smooth muscle. Moderately expressed in esophagus, stomach, small bowel and aorta. Low levels in tail and kidney. Expression also in pheochromocytoma cell line PC-12.

It is found in the nucleus. The protein localises to the cytoplasm. It carries out the reaction L-prolyl-[protein] + 2-oxoglutarate + O2 = trans-4-hydroxy-L-prolyl-[protein] + succinate + CO2. The catalysed reaction is L-prolyl-[hypoxia-inducible factor alpha subunit] + 2-oxoglutarate + O2 = trans-4-hydroxy-L-prolyl-[hypoxia-inducible factor alpha subunit] + succinate + CO2. In terms of biological role, prolyl hydroxylase that mediates hydroxylation of proline residues in target proteins, such as PKM, TELO2, ATF4 and HIF1A. Target proteins are preferentially recognized via a LXXLAP motif. Cellular oxygen sensor that catalyzes, under normoxic conditions, the post-translational formation of 4-hydroxyproline in hypoxia-inducible factor (HIF) alpha proteins. Hydroxylates a specific proline found in each of the oxygen-dependent degradation (ODD) domains (N-terminal, NODD, and C-terminal, CODD) of HIF1A. Also hydroxylates HIF2A. Has a preference for the CODD site for both HIF1A and HIF2A. Hydroxylation on the NODD site by EGLN3 appears to require prior hydroxylation on the CODD site. Hydroxylated HIFs are then targeted for proteasomal degradation via the von Hippel-Lindau ubiquitination complex. Under hypoxic conditions, the hydroxylation reaction is attenuated allowing HIFs to escape degradation resulting in their translocation to the nucleus, heterodimerization with HIF1B, and increased expression of hypoxy-inducible genes. ELGN3 is the most important isozyme in limiting physiological activation of HIFs (particularly HIF2A) in hypoxia. Also hydroxylates PKM in hypoxia, limiting glycolysis. Under normoxia, hydroxylates and regulates the stability of ADRB2. Regulator of cardiomyocyte and neuronal apoptosis. In cardiomyocytes, inhibits the anti-apoptotic effect of BCL2 by disrupting the BAX-BCL2 complex. In neurons, has a NGF-induced proapoptotic effect, probably through regulating CASP3 activity. Also essential for hypoxic regulation of neutrophilic inflammation. Plays a crucial role in DNA damage response (DDR) by hydroxylating TELO2, promoting its interaction with ATR which is required for activation of the ATR/CHK1/p53 pathway. Also mediates hydroxylation of ATF4, leading to decreased protein stability of ATF4. This is Prolyl hydroxylase EGLN3 (Egln3) from Rattus norvegicus (Rat).